Here is a 64-residue protein sequence, read N- to C-terminus: Frontoxin IV (64 aa).

5 disulfide bridges follow: cysteine 3–cysteine 24, cysteine 6–cysteine 11, cysteine 17–cysteine 41, cysteine 45–cysteine 57, and cysteine 58–cysteine 63.

Expressed by the venom gland.

The protein resides in the secreted. Its function is as follows. Produces peripheral paralysis by blocking neuromuscular transmission at the postsynaptic site. Binds to the muscular nicotinic acetylcholine receptor (nAChR). The protein is Frontoxin IV of Micrurus frontalis (Coral snake).